We begin with the raw amino-acid sequence, 269 residues long: Tryptophan synthase alpha chain (269 aa).

Catalysis depends on proton acceptor residues glutamate 49 and aspartate 60.

It belongs to the TrpA family. As to quaternary structure, tetramer of two alpha and two beta chains.

It carries out the reaction (1S,2R)-1-C-(indol-3-yl)glycerol 3-phosphate + L-serine = D-glyceraldehyde 3-phosphate + L-tryptophan + H2O. The protein operates within amino-acid biosynthesis; L-tryptophan biosynthesis; L-tryptophan from chorismate: step 5/5. Functionally, the alpha subunit is responsible for the aldol cleavage of indoleglycerol phosphate to indole and glyceraldehyde 3-phosphate. This Stutzerimonas stutzeri (strain A1501) (Pseudomonas stutzeri) protein is Tryptophan synthase alpha chain.